The sequence spans 157 residues: SUMO-conjugating enzyme UBC9-B (157 aa).

One can recognise a UBC core domain in the interval 4–157 (IALSRLAQER…VRAQAKKFSP (154 aa)). The interval 13-18 (RKAWRK) is interaction with SUMO1. The active-site Glycyl thioester intermediate is C93.

This sequence belongs to the ubiquitin-conjugating enzyme family. In terms of assembly, forms a tight complex with rangap1 and ranbp2. Interacts with vsx1.

It localises to the nucleus. It participates in protein modification; protein sumoylation. Accepts the ubiquitin-like proteins sumo1, sumo2 and sumo3 from the uble1a-uble1b E1 complex and catalyzes their covalent attachment to other proteins with the help of an E3 ligase such as ranbp2 or cbx4. Essential for nuclear architecture and chromosome segregation. Mediates nuclear localization of vsx1. Required for progression through mitosis during organogenesis. This Danio rerio (Zebrafish) protein is SUMO-conjugating enzyme UBC9-B (ube2ib).